The chain runs to 241 residues: Zinc finger CCHC domain-containing protein 17 (241 aa).

An S1 motif domain is found at 16–88 (YTIFQGEVAM…DRIKVSLSMK (73 aa)). Ser-114 carries the phosphoserine modification. The CCHC-type zinc-finger motif lies at 131-148 (TTCKKCGCKGHFAKDCFM). Lys-144 is subject to N6-acetyllysine. Residues 161 to 241 (EEEEKEEAKS…KKKHKKKHKE (81 aa)) are disordered. Residues 166-178 (EEAKSAEFEKPDP) are compositionally biased toward basic and acidic residues. Residues 182–198 (PSRKRKKEKKKKKHRDR) show a composition bias toward basic residues. Ser-183 is modified (phosphoserine). Residues 211–225 (DTGKRARHTSKDSKA) show a composition bias toward basic and acidic residues. Basic residues predominate over residues 226-241 (AKKKKKKKKHKKKHKE).

In terms of assembly, interacts with PNN. Associates with the 60S ribosomal subunit.

The protein resides in the nucleus. The protein localises to the nucleolus. The protein is Zinc finger CCHC domain-containing protein 17 (ZCCHC17) of Homo sapiens (Human).